The following is a 990-amino-acid chain: Pentatricopeptide repeat-containing protein At4g33170 (990 aa).

20 PPR repeats span residues 73–107 (ERFL…DLVS), 109–139 (NSIL…LRQD), 144–178 (SRMT…GLDG), 179–209 (DEFV…MPYR), 210–244 (DVVL…GLNP), 279–313 (EIIF…DVEC), 314–348 (DQVT…GLDL), 349–379 (MLTV…MSER), 380–414 (DLIS…GLKP), 415–450 (DQYT…NNVS), 451–477 (DSFV…LFER), 481–515 (DLVA…GERS), 516–550 (DDFT…GYDL), 551–581 (DLWV…IPVP), 582–616 (DDVA…GVLP), 617–651 (DEFT…NCTN), 652–682 (DPFV…IEMM), 683–717 (NITA…GIKP), 718–753 (DKVT…GIKP), and 754–788 (EIEH…ASAS). The segment at 789-864 (MYRTLLAACR…DPGFSWIEVK (76 aa)) is type E motif. Residues 865–895 (NKIHIFVVDDRSNRQTELIYRKVKDMIRDIK) form a type E(+) motif region. A type DYW motif region spans residues 896–990 (QEGYVPETDF…DGICSCGDYW (95 aa)).

This sequence belongs to the PPR family. PCMP-H subfamily.

This is Pentatricopeptide repeat-containing protein At4g33170 (PCMP-H53) from Arabidopsis thaliana (Mouse-ear cress).